The following is a 322-amino-acid chain: Putative ankyrin repeat protein L897 (322 aa).

ANK repeat units follow at residues 88–117, 181–210, and 248–277; these read DNEYYTYFALSIGAMDVFKWLISHGFSYDM, NIIDVIEYAVQINNCDIIKILVKKFIFWAN, and NKNEALKYAIMMKNYDMIELLINYNIQTDH.

This is Putative ankyrin repeat protein L897 from Acanthamoeba polyphaga (Amoeba).